Consider the following 79-residue polypeptide: MSLEVFEKLEAKVQQAIDTITLLQMEIEELKEKNNSLTQEVQSAQHQREELERENNFLKEQQSGWQERLQALLGRMEEV.

The stretch at 3 to 79 forms a coiled coil; that stretch reads LEVFEKLEAK…QALLGRMEEV (77 aa).

It belongs to the ZapB family. Homodimer. The ends of the coiled-coil dimer bind to each other, forming polymers. Interacts with FtsZ.

It localises to the cytoplasm. Its function is as follows. Non-essential, abundant cell division factor that is required for proper Z-ring formation. It is recruited early to the divisome by direct interaction with FtsZ, stimulating Z-ring assembly and thereby promoting cell division earlier in the cell cycle. Its recruitment to the Z-ring requires functional FtsA or ZipA. The protein is Cell division protein ZapB of Salmonella typhi.